Consider the following 228-residue polypeptide: Cytochrome c oxidase subunit 2 (228 aa).

The Mitochondrial intermembrane segment spans residues 1 to 14; sequence MAYPLQLGFQDATS. A helical membrane pass occupies residues 15-45; that stretch reads PVMEELLHFHDHTLMIIFLISSLVLYIIMLM. Topologically, residues 46 to 59 are mitochondrial matrix; the sequence is LTSKLVHTNMMNVQ. The chain crosses the membrane as a helical span at residues 60 to 87; that stretch reads EMEMIWTILPAIILILIALPSLHTLYMM. Residues 88–228 lie on the Mitochondrial intermembrane side of the membrane; it reads DEINNPLLTI…FENWSASLAQ (141 aa). Cu cation contacts are provided by His161, Cys196, Glu198, Cys200, His204, and Met207. Position 198 (Glu198) interacts with Mg(2+). Tyr218 bears the Phosphotyrosine mark.

The protein belongs to the cytochrome c oxidase subunit 2 family. Component of the cytochrome c oxidase (complex IV, CIV), a multisubunit enzyme composed of 14 subunits. The complex is composed of a catalytic core of 3 subunits MT-CO1, MT-CO2 and MT-CO3, encoded in the mitochondrial DNA, and 11 supernumerary subunits COX4I, COX5A, COX5B, COX6A, COX6B, COX6C, COX7A, COX7B, COX7C, COX8 and NDUFA4, which are encoded in the nuclear genome. The complex exists as a monomer or a dimer and forms supercomplexes (SCs) in the inner mitochondrial membrane with NADH-ubiquinone oxidoreductase (complex I, CI) and ubiquinol-cytochrome c oxidoreductase (cytochrome b-c1 complex, complex III, CIII), resulting in different assemblies (supercomplex SCI(1)III(2)IV(1) and megacomplex MCI(2)III(2)IV(2)). Found in a complex with TMEM177, COA6, COX18, COX20, SCO1 and SCO2. Interacts with TMEM177 in a COX20-dependent manner. Interacts with COX20. Interacts with COX16. Cu cation is required as a cofactor.

The protein resides in the mitochondrion inner membrane. It catalyses the reaction 4 Fe(II)-[cytochrome c] + O2 + 8 H(+)(in) = 4 Fe(III)-[cytochrome c] + 2 H2O + 4 H(+)(out). Functionally, component of the cytochrome c oxidase, the last enzyme in the mitochondrial electron transport chain which drives oxidative phosphorylation. The respiratory chain contains 3 multisubunit complexes succinate dehydrogenase (complex II, CII), ubiquinol-cytochrome c oxidoreductase (cytochrome b-c1 complex, complex III, CIII) and cytochrome c oxidase (complex IV, CIV), that cooperate to transfer electrons derived from NADH and succinate to molecular oxygen, creating an electrochemical gradient over the inner membrane that drives transmembrane transport and the ATP synthase. Cytochrome c oxidase is the component of the respiratory chain that catalyzes the reduction of oxygen to water. Electrons originating from reduced cytochrome c in the intermembrane space (IMS) are transferred via the dinuclear copper A center (CU(A)) of subunit 2 and heme A of subunit 1 to the active site in subunit 1, a binuclear center (BNC) formed by heme A3 and copper B (CU(B)). The BNC reduces molecular oxygen to 2 water molecules using 4 electrons from cytochrome c in the IMS and 4 protons from the mitochondrial matrix. In Loxodonta africana (African elephant), this protein is Cytochrome c oxidase subunit 2 (MT-CO2).